Reading from the N-terminus, the 239-residue chain is Fatty acid metabolism regulator protein (239 aa).

The region spanning 6–74 (QSPAGFAEEY…HGKPTKVNNF (69 aa)) is the HTH gntR-type domain. The H-T-H motif DNA-binding region spans 34-53 (ERELSELIGVTRTTLREVLQ).

In terms of assembly, homodimer.

The protein localises to the cytoplasm. In terms of biological role, multifunctional regulator of fatty acid metabolism. The polypeptide is Fatty acid metabolism regulator protein (Salmonella paratyphi C (strain RKS4594)).